Reading from the N-terminus, the 714-residue chain is Fatty acid oxidation complex subunit alpha (714 aa).

Positions 1 to 190 (MEMASAFTLN…KLGLVDDVVP (190 aa)) are enoyl-CoA hydratase. Positions 306-714 (APLNSVGILG…FWKTTATDLQ (409 aa)) are 3-hydroxyacyl-CoA dehydrogenase.

The protein in the N-terminal section; belongs to the enoyl-CoA hydratase/isomerase family. This sequence in the central section; belongs to the 3-hydroxyacyl-CoA dehydrogenase family. As to quaternary structure, heterotetramer of two alpha chains (FadJ) and two beta chains (FadI).

The protein resides in the cytoplasm. It carries out the reaction a (3S)-3-hydroxyacyl-CoA = a (2E)-enoyl-CoA + H2O. It catalyses the reaction a 4-saturated-(3S)-3-hydroxyacyl-CoA = a (3E)-enoyl-CoA + H2O. The enzyme catalyses a (3S)-3-hydroxyacyl-CoA + NAD(+) = a 3-oxoacyl-CoA + NADH + H(+). The catalysed reaction is (3S)-3-hydroxybutanoyl-CoA = (3R)-3-hydroxybutanoyl-CoA. The protein operates within lipid metabolism; fatty acid beta-oxidation. Catalyzes the formation of a hydroxyacyl-CoA by addition of water on enoyl-CoA. Also exhibits 3-hydroxyacyl-CoA epimerase and 3-hydroxyacyl-CoA dehydrogenase activities. In Escherichia coli (strain SMS-3-5 / SECEC), this protein is Fatty acid oxidation complex subunit alpha.